A 158-amino-acid polypeptide reads, in one-letter code: C-type lectin mannose-binding isoform (158 aa).

Positions 1-23 are cleaved as a signal peptide; it reads MGRFLLVTLSLLVGAFSLNEANS. Intrachain disulfides connect Cys26–Cys37, Cys54–Cys154, Cys61–Cys156, and Cys129–Cys146. Residues 33 to 155 form the C-type lectin domain; that stretch reads KNGFCYKVFN…CKALYSFICQ (123 aa). Residues 119–121 carry the Mannose-binding motif; sequence EPN. The N-linked (GlcNAc...) asparagine glycan is linked to Asn121. Ca(2+) is bound by residues Glu127, Asn142, and Asp143.

This sequence belongs to the true venom lectin family. Dimer. Probably disulfide-linked homodimer. As to expression, expressed by the venom gland.

Its subcellular location is the secreted. Mannose-binding lectin that binds to and agglutinates rabbit (but not human) erythrocytes in a calcium-dependent manner. The polypeptide is C-type lectin mannose-binding isoform (Oxyuranus scutellatus (Coastal taipan)).